Consider the following 253-residue polypeptide: tRNA 2'-phosphotransferase 1 (253 aa).

Position 1 is an N-acetylmethionine (Met1). 2 disordered regions span residues Met1–Val29 and Lys225–Gln253. Position 240 is a phosphoserine (Ser240). Over residues His243–Gln253 the composition is skewed to basic residues.

It belongs to the KptA/TPT1 family. Widely expressed. Weakly or not expressed in lung, spleen, small intestine and peripheral blood leukocytes.

The catalysed reaction is 2'-phospho-[ligated tRNA] + NAD(+) = mature tRNA + ADP-alpha-D-ribose 1'',2''-cyclic phosphate + nicotinamide. Catalyzes the last step of tRNA splicing, the transfer of the splice junction 2'-phosphate from ligated tRNA to NAD to produce ADP-ribose 1''-2'' cyclic phosphate. This Homo sapiens (Human) protein is tRNA 2'-phosphotransferase 1 (TRPT1).